A 153-amino-acid chain; its full sequence is Insulin-like growth factor 1 (153 aa).

A b region spans residues 49-77 (GPETLCGAELVDALQFVCGDRGFYFNKPT). 3 disulfides stabilise this stretch: C54–C96, C66–C109, and C95–C100. The segment at 78 to 89 (GYGSSSRRAPQT) is c. Residues 90 to 110 (GIVDECCFRSCDLRRLEMYCA) form an a region. The segment at 111-118 (PLKPAKSA) is d. Positions 119–153 (RSVRAQRHTDMPKAQKEVHLKNTSRGSSGNKNYRM) are cleaved as a propeptide — e peptide. Residues 120–153 (SVRAQRHTDMPKAQKEVHLKNTSRGSSGNKNYRM) are disordered. Residues 125–138 (RHTDMPKAQKEVHL) are compositionally biased toward basic and acidic residues. Residues 139–153 (KNTSRGSSGNKNYRM) are compositionally biased toward polar residues.

It belongs to the insulin family. In terms of assembly, forms a ternary complex with IGFR1 and ITGAV:ITGB3. Forms a ternary complex with IGFR1 and ITGA6:ITGB4. Forms a ternary complex with IGFBP3 and ALS.

Its subcellular location is the secreted. The insulin-like growth factors, isolated from plasma, are structurally and functionally related to insulin but have a much higher growth-promoting activity. May be a physiological regulator of [1-14C]-2-deoxy-D-glucose (2DG) transport and glycogen synthesis in osteoblasts. Stimulates glucose transport in bone-derived osteoblastic (PyMS) cells and is effective at much lower concentrations than insulin, not only regarding glycogen and DNA synthesis but also with regard to enhancing glucose uptake. May play a role in synapse maturation. Ca(2+)-dependent exocytosis of IGF1 is required for sensory perception of smell in the olfactory bulb. Acts as a ligand for IGF1R. Binds to the alpha subunit of IGF1R, leading to the activation of the intrinsic tyrosine kinase activity which autophosphorylates tyrosine residues in the beta subunit thus initiating a cascade of down-stream signaling events leading to activation of the PI3K-AKT/PKB and the Ras-MAPK pathways. Binds to integrins ITGAV:ITGB3 and ITGA6:ITGB4. Its binding to integrins and subsequent ternary complex formation with integrins and IGFR1 are essential for IGF1 signaling. Induces the phosphorylation and activation of IGFR1, MAPK3/ERK1, MAPK1/ERK2 and AKT1. As part of the MAPK/ERK signaling pathway, acts as a negative regulator of apoptosis in cardiomyocytes via promotion of STUB1/CHIP-mediated ubiquitination and degradation of ICER-type isoforms of CREM. The polypeptide is Insulin-like growth factor 1 (Sus scrofa (Pig)).